The sequence spans 1638 residues: MASPSPANSPMPPPQAPSPMAPPSQSPAPSPHSPYPHQQPGPLQGPPPPGHPGAYGHPMQHGPPGQGPPGHHMPPHHQGMIFSKGPHMGMQMPPTGPNMSPYQTHGMPPNAPTQPCIVSPGGPPGGPPPPERSSQENLHALQRAIDSMEEKGLQEDPRYSQLLAMRATSKHQHLNGNQVNLLRTQITAYRLLARNKPISMQMQQALQAAQQQPPPGPPIGPPGAPGGPPPGSQHAGQPPVPPQQQQQPPPSAGTPPQCSTPPASNPYGPPVPGQKMQVAPPPPHMQQGQPLPPQPPQVGGPPPIQQQQPPQQQQQQSQPPPPEPHQHQLPNGGKPLSMGPSGGQPLIPSSPMQPQVRGTLPGMPPGSQVPQPGGGPQRQVPPAGMPMPKPNRITTVAKPVGLDPITLLQERENRIAARISLRMQELQRLPATMSEDLRLQAAIELRALRVLNFQRQLRMEFVQCTRRDTTLETALNIKLYKRTKRQGLREARATEKLEKQQKLEAERKRRQKHLEFLAAVLQHGKDLREFHRNNKAQLARMNKAVMNHHANAEREQKKEQERIEKERMRRLMAEDEEGYRKLIDQKKDKRLAFLLSQTDEYISNLTQMVKQHKDDQMKKKEEEGKRLIQFKKELLMSGEYIGIDEGSIVADMRVHVVEQCTGKKLTGDDAPMLKHLHRWLNMHPGWDWIDDEEDSCGSNDDHKPKVEEQPTATEDATDKAQATGNDEDAKDLITKAKVEDDEYRTEEQTYYSIAHTIHEKVVEQASIMVNGTLKEYQIKGLEWLVSLYNNNLNGILADEMGLGKTIQTISLVTYLMDRKKVMGPYLIIVPLSTLPNWVLEFEKWAPAVGVVSYKGSPQGRRLLQNQMRATKFNVLLTTYEYVIKDKAVLAKIQWKYMIIDEGHRMKNHHCKLTQVLNTHYIAPYRLLLTGTPLQNKLPELWALLNFLLPSIFKSCSTFEQWFNAPFATTGEKVELNEEETILIIRRLHKVLRPFLLRRLKKEVEHQLPDKVEYIIKCDMSALQRVLYKHMQSKGVLLTDGSEKGKHGKGGAKALMNTIVQLRKLCNHPFMFQHIEEKYCDHTGGHGVVSGPDLYRVSGKFELLDRILPKLKATNHRVLLFCQMTQCMTIIEDYLGWRQFGYLRLDGTTKAEDRGELLRKFNAKGSDVFVFLLSTRAGGLGLNLQTADTVVIFDSDWNPHQDLQAQDRAHRIGQRNEVRVLRLMTVNSVEERILAAARYKLNMDEKVIQAGMFDQKSTGSERQQFLQTILHQDDNEEEEENEVPDDEMINMMIARSEEEIEIFKRMDAERKKEDEEIHPGRERLIDESELPDWLTKDDDEVERFHYQYDEDTILGRGSRQRKEVDYTDSLTEKEWLKAIDDGAEFDEEEEEDDSKRKRRKRKNRKEESDDDSLILKRRRRQNLDKRSKKQMHKIMSAVIKHNQDGRTLSEPFMKLPSRQRLPDYYEIIKRPVDIKKILQRIEDCKYADLNELEKDFMQLCQNAQIYNEEASLIYLDSIALQKVFVGARQRITAAADAAAVAAGDNTGEAHGNGGSDNSDNDDDDGGDDGSDDEEIATTSAAAVKMKLKLNKSLASAPATPTQSSSNVSSGAATTSKKQTRRKRSQKKYTISDDDDDDMD.

Disordered regions lie at residues 1-137 (MASP…SQEN) and 201-387 (QMQQ…GMPM). Pro residues predominate over residues 7-51 (ANSPMPPPQAPSPMAPPSQSPAPSPHSPYPHQQPGPLQGPPPPGH). Low complexity predominate over residues 52 to 63 (PGAYGHPMQHGP). Residues 121–131 (GGPPGGPPPPE) are compositionally biased toward pro residues. One can recognise a QLQ domain in the interval 173–208 (HLNGNQVNLLRTQITAYRLLARNKPISMQMQQALQA). Over residues 201–211 (QMQQALQAAQQ) the composition is skewed to low complexity. 4 stretches are compositionally biased toward pro residues: residues 212–231 (QPPP…PPPG), 238–253 (PPVP…PSAG), 263–272 (ASNPYGPPVP), and 279–304 (APPP…PPPI). Composition is skewed to low complexity over residues 305-317 (QQQQ…QQQS) and 365-382 (PGSQ…QVPP). Residues 501-573 (QKLEAERKRR…EKERMRRLMA (73 aa)) form the HSA domain. The segment at 691 to 730 (DEEDSCGSNDDHKPKVEEQPTATEDATDKAQATGNDEDAK) is disordered. Ser-695 and Ser-698 each carry phosphoserine. The segment covering 699–708 (NDDHKPKVEE) has biased composition (basic and acidic residues). Over residues 710 to 724 (PTATEDATDKAQATG) the composition is skewed to polar residues. Residues 785–950 (VSLYNNNLNG…WALLNFLLPS (166 aa)) form the Helicase ATP-binding domain. ATP is bound at residue 798–805 (DEMGLGKT). Residues 900 to 903 (DEGH) carry the DEGH box motif. Residues 1102–1263 (LLDRILPKLK…QKSTGSERQQ (162 aa)) enclose the Helicase C-terminal domain. A compositionally biased stretch (acidic residues) spans 1380 to 1391 (DGAEFDEEEEED). The disordered stretch occupies residues 1380–1412 (DGAEFDEEEEEDDSKRKRRKRKNRKEESDDDSL). 2 positions are modified to phosphoserine: Ser-1407 and Ser-1411. The region spanning 1425 to 1530 (RSKKQMHKIM…KVFVGARQRI (106 aa)) is the Bromo domain. Positions 1544-1578 (NTGEAHGNGGSDNSDNDDDDGGDDGSDDEEIATTS) are disordered. Over residues 1557–1574 (SDNDDDDGGDDGSDDEEI) the composition is skewed to acidic residues. 2 positions are modified to phosphoserine: Ser-1591 and Ser-1594. A compositionally biased stretch (low complexity) spans 1592 to 1604 (LASAPATPTQSSS). A disordered region spans residues 1592-1638 (LASAPATPTQSSSNVSSGAATTSKKQTRRKRSQKKYTISDDDDDDMD). The segment covering 1616–1625 (KQTRRKRSQK) has biased composition (basic residues).

As to quaternary structure, component of the Brahma complex, which is composed of brm, osa, mor, Snr1/Bap45, dalao/Bap111, Bap55, Bap60 and Act42A/Bap47. Interacts with asf1. Associates with the brm-HDAC3-erm repressor complex, composed of brm, HDAC3 and erm. Interacts with erm and HDAC3.

The protein resides in the nucleus. The enzyme catalyses ATP + H2O = ADP + phosphate + H(+). In terms of biological role, transcriptional regulator. Acts as a coactivator, assisting one or more dedicated transcriptional activators of ANTC and BXC homeotic gene clusters. Can counteract the repressive effect of Polycomb protein. ATPase subunit of the Brahma complex, a multiprotein complex which is the equivalent of the yeast SWI/SNF complex and acts by remodeling the chromatin by catalyzing an ATP-dependent alteration in the structure of nucleosomal DNA. This complex can both serve as a transcriptional coactivator or corepressor, depending on the context. In type II neuroblast lineage, as part of the Brm remodeling complex, suppresses the formation of ectopic neuroblasts probably through interaction with erm and HDAC3. The chain is ATP-dependent helicase brm (brm) from Drosophila melanogaster (Fruit fly).